The following is a 310-amino-acid chain: Lymphotoxin-beta (310 aa).

Residues Met1–Thr27 are Cytoplasmic-facing. A helical; Signal-anchor for type II membrane protein membrane pass occupies residues Ser28–Pro48. At Gln49 to Val310 the chain is on the extracellular side. The segment at Gln67–Ser86 is disordered. Positions Pro138–Val293 constitute a THD domain. Asn272 carries N-linked (GlcNAc...) asparagine glycosylation.

The protein belongs to the tumor necrosis factor family. As to quaternary structure, heterotrimer of either two LTB and one LTA subunits or (less prevalent) two LTA and one LTB subunits.

It localises to the membrane. In terms of biological role, cytokine that binds to LTBR/TNFRSF3. May play a specific role in immune response regulation. Provides the membrane anchor for the attachment of the heterotrimeric complex to the cell surface. The polypeptide is Lymphotoxin-beta (LTB) (Marmota monax (Woodchuck)).